A 290-amino-acid polypeptide reads, in one-letter code: Oxaloacetate decarboxylase (290 aa).

A substrate-binding site is contributed by Ser-53. A Mg(2+)-binding site is contributed by Asp-91. Positions 162 and 238 each coordinate substrate.

The protein belongs to the isocitrate lyase/PEP mutase superfamily. Oxaloacetate decarboxylase family. In terms of assembly, homotetramer; dimer of dimers. The cofactor is Mg(2+).

It carries out the reaction oxaloacetate + H(+) = pyruvate + CO2. Its function is as follows. Catalyzes the decarboxylation of oxaloacetate into pyruvate. Seems to play a role in maintaining cellular concentrations of bicarbonate and pyruvate. This Ectopseudomonas mendocina (strain ymp) (Pseudomonas mendocina) protein is Oxaloacetate decarboxylase.